A 92-amino-acid polypeptide reads, in one-letter code: Calitoxin (92 aa).

The N-terminal stretch at Met-1 to Ser-20 is a signal peptide. The propeptide occupies Arg-21–Ala-42. 3 disulfide bridges follow: Cys-47-Cys-86, Cys-49-Cys-77, and Cys-67-Cys-87.

Belongs to the sea anemone sodium channel inhibitory toxin family. Expressed both outside and in acontia, a specialised envenomation structure laden with batteries of venom-containing nematocysts found only in the superfamily Metridioidea.

The protein resides in the secreted. It is found in the nematocyst. Functionally, in neuromuscular preparation of crustaceans, the toxin increased neurotransmitter release, causing repetitive firing of the axons. May affect sodium channels (Nav). This chain is Calitoxin, found in Calliactis polypus (Hermit crab anemone).